The chain runs to 83 residues: Aspergillic acid biosynthesis cluster protein F (83 aa).

It functions in the pathway secondary metabolite biosynthesis. In terms of biological role, part of the gene cluster that mediates the biosynthesis of aspergillic acid, a hydroxamic acid-containing pyrazinone with aliphatic side chains that originates from leucine (Leu) and isoleucine (Ile). Aspergillic acid has antibiotic properties and was shown to be lethal to mice. The first step in the pathway is the production of deoxyaspergillic acid via a condensation between the Ile amine and the Leu carboxylic acid, followed by a reductive release from the protein forming the dipeptide aldehyde NH(2)-Leu-Ile-CHO, which could undergo an intermolecular cyclization resulting in a dihydropyrazinone. As the NRPS asaC lacks a condensation domain, it is improbable that it is responsible for condensation of Leu and Ile. One possibility is that asaC acts on a previously condensed dipeptide and functions as a Leu-Ile reductase to yield deoxyaspergillic acid. After asaC forms deoxyaspergillic acid, the cytochrome P450 asaD oxidizes the pyrazinone to the hydroxamic acid-containing bioactive metabolite aspergillic acid. The hydroxylase/desaturase asaB can then convert aspergillic acid to hydroxyaspergillic acid. Both aspergillic acid and hydroxyaspergillic acid can form complexes with iron producing ferriaspergillin analogs. The sequence is that of Aspergillic acid biosynthesis cluster protein F from Aspergillus flavus (strain ATCC 200026 / FGSC A1120 / IAM 13836 / NRRL 3357 / JCM 12722 / SRRC 167).